A 208-amino-acid chain; its full sequence is ATP synthase subunit beta, chloroplastic (208 aa).

Belongs to the ATPase alpha/beta chains family. In terms of assembly, F-type ATPases have 2 components, CF(1) - the catalytic core - and CF(0) - the membrane proton channel. CF(1) has five subunits: alpha(3), beta(3), gamma(1), delta(1), epsilon(1). CF(0) has four main subunits: a(1), b(1), b'(1) and c(9-12).

Its subcellular location is the plastid. The protein resides in the chloroplast thylakoid membrane. It catalyses the reaction ATP + H2O + 4 H(+)(in) = ADP + phosphate + 5 H(+)(out). Its function is as follows. Produces ATP from ADP in the presence of a proton gradient across the membrane. The catalytic sites are hosted primarily by the beta subunits. This is ATP synthase subunit beta, chloroplastic (atpB) from Hypolepis hostilis (Fern).